We begin with the raw amino-acid sequence, 284 residues long: Phospholipid phosphatase 1 (284 aa).

The Cytoplasmic portion of the chain corresponds to 1–6 (MFDKTR). Positions 5-7 (TRL) match the PDZ-binding; involved in localization to the apical cell membrane motif. Residues 7–27 (LPYVALDVLCVLLAGLPFAIL) traverse the membrane as a helical segment. Residues 28 to 53 (TSRHTPFQRGVFCNDESIKYPYKEDT) lie on the Extracellular side of the membrane. Residues 54 to 74 (IPYALLGGIIIPFSIIVIILG) form a helical membrane-spanning segment. Residues 75–94 (ETLSVYCNLLHSNSFIRNNY) are Cytoplasmic-facing. Residues 95–115 (IATIYKAIGTFLFGAAASQSL) traverse the membrane as a helical segment. Residues 116 to 164 (TDIAKYSIGRLRPHFLDVCDPDWSKINCSDGYIEYYICRGNAERVKEGR) lie on the Extracellular side of the membrane. Residues 120–128 (KYSIGRLRP) form a phosphatase sequence motif I region. The N-linked (GlcNAc...) asparagine glycan is linked to Asn142. Residues 165–185 (LSFYSGHSSFSMYCMLFVALY) traverse the membrane as a helical segment. Residues 168–171 (YSGH) are phosphatase sequence motif II. The Proton donors role is filled by His171. Residues 186 to 199 (LQARMKGDWARLLR) lie on the Cytoplasmic side of the membrane. The chain crosses the membrane as a helical span at residues 200–220 (PTLQFGLVAVSIYVGLSRVSD). The tract at residues 216 to 227 (SRVSDYKHHWSD) is phosphatase sequence motif III. At 221 to 229 (YKHHWSDVL) the chain is on the extracellular side. The active-site Nucleophile is the His223. A helical membrane pass occupies residues 230–250 (TGLIQGALVAILVAVYVSDFF). At 251-284 (KERTSFKERKEEDSHTTLHETPTTGNHYPSNHQP) the chain is on the cytoplasmic side. The interval 260–284 (KEEDSHTTLHETPTTGNHYPSNHQP) is disordered. A compositionally biased stretch (polar residues) spans 269–284 (HETPTTGNHYPSNHQP).

It belongs to the PA-phosphatase related phosphoesterase family. In terms of assembly, forms functional homodimers and homooligomers that are not required for substrate recognition and catalytic activity. Can also form heterooligomers with PLPP2 and PLPP3. Post-translationally, N-glycosylated. N-linked sugars are of the complex type. N-glycosylation is not required for the phosphatase activity. In terms of tissue distribution, widely expressed with highest expression found in prostate. Found to be down-regulated in colon adenocarcinomas. Predominant in kidney, lung, placenta and liver. As to expression, predominant in heart and pancreas.

The protein localises to the cell membrane. The protein resides in the apical cell membrane. It is found in the membrane raft. It localises to the membrane. Its subcellular location is the caveola. The catalysed reaction is a 1,2-diacyl-sn-glycero-3-phosphate + H2O = a 1,2-diacyl-sn-glycerol + phosphate. The enzyme catalyses 1,2-dihexadecanoyl-sn-glycero-3-phosphate + H2O = 1,2-dihexadecanoyl-sn-glycerol + phosphate. It catalyses the reaction 1,2-di-(9Z-octadecenoyl)-sn-glycero-3-phosphate + H2O = 1,2-di-(9Z-octadecenoyl)-sn-glycerol + phosphate. It carries out the reaction a monoacyl-sn-glycero-3-phosphate + H2O = a monoacylglycerol + phosphate. The catalysed reaction is (9Z)-octadecenoyl-sn-glycero-3-phosphate + H2O = (9Z-octadecenoyl)-glycerol + phosphate. The enzyme catalyses a 1-acyl-sn-glycero-3-phosphate + H2O = a 1-acyl-sn-glycerol + phosphate. It catalyses the reaction 1-(9Z-octadecenoyl)-sn-glycero-3-phosphate + H2O = 1-(9Z-octadecenoyl)-sn-glycerol + phosphate. It carries out the reaction a 1,2-diacyl-sn-glycerol 3-diphosphate + H2O = a 1,2-diacyl-sn-glycero-3-phosphate + phosphate + H(+). The catalysed reaction is sphing-4-enine 1-phosphate + H2O = sphing-4-enine + phosphate. The enzyme catalyses an N-acylsphing-4-enine 1-phosphate + H2O = an N-acylsphing-4-enine + phosphate. It catalyses the reaction N-(octanoyl)-sphing-4-enine-1-phosphate + H2O = N-octanoylsphing-4-enine + phosphate. It carries out the reaction N-(9Z-octadecenoyl)-ethanolamine phosphate + H2O = N-(9Z-octadecenoyl) ethanolamine + phosphate. The catalysed reaction is 1-hexadecanoyl-2-(9Z-octadecenoyl)-sn-glycero-3-phosphate + H2O = 1-hexadecanoyl-2-(9Z-octadecenoyl)-sn-glycerol + phosphate. It functions in the pathway lipid metabolism; phospholipid metabolism. Its activity is regulated as follows. Magnesium-independent phospholipid phosphatase. Insensitive to N-ethylmaleimide. Inhibited by sphingosine, zinc ions and modestly by propanolol. Inhibited by vanadate. Functionally, magnesium-independent phospholipid phosphatase of the plasma membrane that catalyzes the dephosphorylation of a variety of glycerolipid and sphingolipid phosphate esters including phosphatidate/PA, lysophosphatidate/LPA, diacylglycerol pyrophosphate/DGPP, sphingosine 1-phosphate/S1P and ceramide 1-phosphate/C1P. Also acts on N-oleoyl ethanolamine phosphate/N-(9Z-octadecenoyl)-ethanolamine phosphate, a potential physiological compound. Through its extracellular phosphatase activity allows both the hydrolysis and the cellular uptake of these bioactive lipid mediators from the milieu, regulating signal transduction in different cellular processes. It is for instance essential for the extracellular hydrolysis of S1P and subsequent conversion into intracellular S1P. Involved in the regulation of inflammation, platelets activation, cell proliferation and migration among other processes. May also have an intracellular activity to regulate phospholipid-mediated signaling pathways. The sequence is that of Phospholipid phosphatase 1 from Homo sapiens (Human).